Reading from the N-terminus, the 211-residue chain is MTRVASTSAMNLAKKLAEAGIRHPAVLHAVATTPRELFLDGALAHKAYENTALPIGQGQTISQPYIVARMTELLLQHNPQKVLEIGTGSGYQAAVLASLIPELFTIERIKALQIQARQRLKRLDLHNVAFKYGDGWQGWSNRGPFDGIMVTAAAATVPQALLEQLSEHGVLIIPVGEDTQQLLKITRIGQTFQSEIIEAVKFVPLINGDLA.

The active site involves S62.

It belongs to the methyltransferase superfamily. L-isoaspartyl/D-aspartyl protein methyltransferase family.

The protein localises to the cytoplasm. It carries out the reaction [protein]-L-isoaspartate + S-adenosyl-L-methionine = [protein]-L-isoaspartate alpha-methyl ester + S-adenosyl-L-homocysteine. Functionally, catalyzes the methyl esterification of L-isoaspartyl residues in peptides and proteins that result from spontaneous decomposition of normal L-aspartyl and L-asparaginyl residues. It plays a role in the repair and/or degradation of damaged proteins. The protein is Protein-L-isoaspartate O-methyltransferase of Shewanella frigidimarina (strain NCIMB 400).